We begin with the raw amino-acid sequence, 204 residues long: UPF0134 protein MPN_655 (204 aa).

The disordered stretch occupies residues 46 to 132 (EVENKPKIPI…FNEFKDSNNQ (87 aa)). Residues 64–80 (SPKPLKPPKPPKPPKGP) are compositionally biased toward pro residues. Residues 117 to 132 (YVTRKEFNEFKDSNNQ) show a composition bias toward basic and acidic residues.

This sequence belongs to the UPF0134 family.

In Mycoplasma pneumoniae (strain ATCC 29342 / M129 / Subtype 1) (Mycoplasmoides pneumoniae), this protein is UPF0134 protein MPN_655.